The sequence spans 460 residues: Serine--tRNA ligase (460 aa).

Thr-255 to Glu-257 contacts L-serine. Residues Arg-286 to Glu-288 and Val-302 each bind ATP. Glu-309 contributes to the L-serine binding site. Glu-373–Ser-376 lines the ATP pocket. An L-serine-binding site is contributed by Thr-409.

The protein belongs to the class-II aminoacyl-tRNA synthetase family. Type-1 seryl-tRNA synthetase subfamily. Homodimer. The tRNA molecule binds across the dimer.

It is found in the cytoplasm. It catalyses the reaction tRNA(Ser) + L-serine + ATP = L-seryl-tRNA(Ser) + AMP + diphosphate + H(+). The catalysed reaction is tRNA(Sec) + L-serine + ATP = L-seryl-tRNA(Sec) + AMP + diphosphate + H(+). It functions in the pathway aminoacyl-tRNA biosynthesis; selenocysteinyl-tRNA(Sec) biosynthesis; L-seryl-tRNA(Sec) from L-serine and tRNA(Sec): step 1/1. Its function is as follows. Catalyzes the attachment of serine to tRNA(Ser). Is also able to aminoacylate tRNA(Sec) with serine, to form the misacylated tRNA L-seryl-tRNA(Sec), which will be further converted into selenocysteinyl-tRNA(Sec). This is Serine--tRNA ligase from Hyperthermus butylicus (strain DSM 5456 / JCM 9403 / PLM1-5).